The primary structure comprises 331 residues: DNA-directed RNA polymerase subunit alpha (331 aa).

The tract at residues Met-1–Glu-223 is alpha N-terminal domain (alpha-NTD). An alpha C-terminal domain (alpha-CTD) region spans residues Pro-260 to Asp-331.

This sequence belongs to the RNA polymerase alpha chain family. As to quaternary structure, homodimer. The RNAP catalytic core consists of 2 alpha, 1 beta, 1 beta' and 1 omega subunit. When a sigma factor is associated with the core the holoenzyme is formed, which can initiate transcription.

It catalyses the reaction RNA(n) + a ribonucleoside 5'-triphosphate = RNA(n+1) + diphosphate. In terms of biological role, DNA-dependent RNA polymerase catalyzes the transcription of DNA into RNA using the four ribonucleoside triphosphates as substrates. This is DNA-directed RNA polymerase subunit alpha from Deinococcus geothermalis (strain DSM 11300 / CIP 105573 / AG-3a).